Consider the following 163-residue polypeptide: Retinoic acid receptor responder protein 2 (163 aa).

An N-terminal signal peptide occupies residues Met-1 to Ala-20. 3 disulfides stabilise this stretch: Cys-77–Cys-87, Cys-98–Cys-117, and Cys-101–Cys-135. The propeptide occupies Lys-158 to Ser-163.

Secreted in an inactive precursor form, prochemerin, which is proteolytically processed by a variety of extracellular proteases to generate forms with differing levels of bioactivity. For example, the removal of six amino acids results in chemerin-157, which exhibits the highest activity, while removal of seven amino acids results in chemerin-156 which has slightly less activity. Some proteases are able to cleave at more than one site and chemerin forms may be sequentially processed by different enzymes to modulate activity levels. The coordinated expression and activity of chemerin-modifying enzymes is essential for regulating its bioactivation, inactivation and, consequently, biological function. Cathepsin G cleaves seven C-terminal amino acids from prochemerin (chemerin-156), elastase is able to cleave six (chemerin-157), eight (chemerin-155) or eleven (chemerin-152), plasmin cleaves five amino acids (chemerin-158), and tryptase cleaves five (chemerin-158) or eight (chemerin-155). Multiple cleavages might be required to fully activate chemerin, with an initial tryptase cleavage resulting in chemerin with low activity (chemerin-158), and a second cleavage by carboxypeptidase N or B producing highly active chemerin (chemerin-157).

It localises to the secreted. Adipocyte-secreted protein (adipokine) that regulates adipogenesis, metabolism and inflammation through activation of the chemokine-like receptor 1 (CMKLR1). Also acts as a ligand for CMKLR2. Can also bind to C-C chemokine receptor-like 2 (CCRL2), but with a lower affinity than it does to CMKLR1 or CMKLR2. Positively regulates adipocyte differentiation, modulates the expression of adipocyte genes involved in lipid and glucose metabolism and might play a role in angiogenesis, a process essential for the expansion of white adipose tissue. Also acts as a pro-inflammatory adipokine, causing an increase in secretion of pro-inflammatory and prodiabetic adipokines, which further impair adipose tissue metabolic function and have negative systemic effects including impaired insulin sensitivity, altered glucose and lipid metabolism, and a decrease in vascular function in other tissues. Can have both pro- and anti-inflammatory properties depending on the modality of enzymatic cleavage by different classes of proteases. Acts as a chemotactic factor for leukocyte populations expressing CMKLR1, particularly immature plasmacytoid dendritic cells, but also immature myeloid DCs, macrophages and natural killer cells. Exerts an anti-inflammatory role by preventing TNF/TNFA-induced VCAM1 expression and monocytes adhesion in vascular endothelial cells. The effect is mediated via inhibiting activation of NF-kappa-B and CRK/p38 through stimulation of AKT1/NOS3 signaling and nitric oxide production. Exhibits an antimicrobial function in the skin. In Pongo abelii (Sumatran orangutan), this protein is Retinoic acid receptor responder protein 2 (RARRES2).